The primary structure comprises 192 residues: Ribosomal RNA small subunit methyltransferase G (192 aa).

S-adenosyl-L-methionine contacts are provided by residues G63, F68, 112–113, and R125; that span reads IE.

The protein belongs to the methyltransferase superfamily. RNA methyltransferase RsmG family.

It is found in the cytoplasm. The catalysed reaction is guanosine(527) in 16S rRNA + S-adenosyl-L-methionine = N(7)-methylguanosine(527) in 16S rRNA + S-adenosyl-L-homocysteine. Specifically methylates the N7 position of guanine in position 527 of 16S rRNA. The protein is Ribosomal RNA small subunit methyltransferase G of Rickettsia bellii (strain OSU 85-389).